The chain runs to 176 residues: Ribosome rescue factor SmrB (176 aa).

The 76-residue stretch at 93–168 folds into the Smr domain; sequence LDLHGYRQSE…GDAALLVLID (76 aa).

It belongs to the SmrB family. Associates with collided ribosomes, but not with correctly translating polysomes.

Its function is as follows. Acts as a ribosome collision sensor. Detects stalled/collided disomes (pairs of ribosomes where the leading ribosome is stalled and a second ribosome has collided with it) and endonucleolytically cleaves mRNA at the 5' boundary of the stalled ribosome. Stalled/collided disomes form a new interface (primarily via the 30S subunits) that binds SmrB. Cleaved mRNA becomes available for tmRNA ligation, leading to ribosomal subunit dissociation and rescue of stalled ribosomes. In Shewanella putrefaciens (strain CN-32 / ATCC BAA-453), this protein is Ribosome rescue factor SmrB.